Here is a 1035-residue protein sequence, read N- to C-terminus: Putative protein FAM47C (1035 aa).

Disordered regions lie at residues 1-21 (MGDQRPQDRPSSPGMDSTPWY) and 159-797 (LEDA…RRVS). Basic and acidic residues predominate over residues 159–173 (LEDAGSCEGQEKTTD). The span at 380-392 (PEPPKTRVPPLRP) shows a compositional bias: pro residues. Positions 478-490 (PPEKDVSHLRPEP) are enriched in basic and acidic residues. Polar residues predominate over residues 533–544 (SLHQAPPESSVS). Basic and acidic residues-rich tracts occupy residues 611-622 (PETRVSHLRPEP), 683-694 (PETRVSHLRPEP), and 753-766 (EPLETRVSHLRPEP).

The protein belongs to the FAM47 family.

This chain is Putative protein FAM47C (FAM47C), found in Homo sapiens (Human).